An 856-amino-acid polypeptide reads, in one-letter code: MAVDAADRREVIVKIDGENGNNNGVSGETVGKIWRDGSYDFWTDGEGNLNKGHNAAAVDSDRSAATTGEQQKDEGFEFRRGEDPPTKLIGQFLHKQQASGEICLDMDLGMDELQSRGLTPVSESPRVSTKRDPVGRRDSRSNTNNNDDGEVVKCSGNNAPIQRSSSTLLKMRTRSRLSDPPTPQLPPQTADMKSGRIPKSGQMKSGFFGKSPKTQGEEEEDDPFAAEDLPEEYRKDKLSLWIVLEWLSLILIIAGFVCTLAIPSLRKKKLWELQLWKWESMVLVLICGRLVSSWIVKIVVFFIERNFLLRKRVLYFVYGVRKAVQNCLWLGLVLLAWHFLFDEKVAKAANTKALRVVTKIFVCLLVGFLLWLVKTLLVKVLASSFHMSTYFDRIQESLFTQYVIETLSGPPLIEIQKNEEEEERISVEVKKFQNPGGVEIQSGAQKSPMKTGKSPFLSHVLSNGGGGGGENKGITIDSLHKLNPKNVSAWKMKRLMNIIRNGSLTTLDEQLQDPSLDDDKGNQIRSEFEAKLAARKIFHNVAKPGSKFIYANDIMRFLPDDEALKTLSLFEGASETNRISKSSLKNWVVNAFRERRALALTLNDTKTAVNRLHKMVNIVVGIIILVIWLIILGITSTKFLVVMSSQVVVVAFIFGNMCKIVFESIIYLFVIHPFDVGDRCEIDGVQMVVEEMNILTTVFLRFDNQKVVYPNSLLWTKSIGNYYRSPDMGDGIEFSIHITTPAEKIILIKQRITSYIEGKKDHWYPAPMIVFKDMESLNSVRIAVWPTHRMNHQDMGEKWARRSQLVEEIAKICRELDIEYRLYPLDINVRNLPTSTALPVSDRLPPNWSAPASGSN.

Disordered regions lie at residues 45–86 (GEGN…DPPT) and 116–226 (RGLT…PFAA). 2 stretches are compositionally biased toward basic and acidic residues: residues 70-85 (QQKDEGFEFRRGEDPP) and 129-140 (TKRDPVGRRDSR). Polar residues predominate over residues 155–168 (SGNNAPIQRSSSTL). Ser211 carries the post-translational modification Phosphoserine. Positions 217–226 (EEEEDDPFAA) are enriched in acidic residues. The next 4 helical transmembrane spans lie at 242-262 (IVLEWLSLILIIAGFVCTLAI), 283-303 (LVLICGRLVSSWIVKIVVFFI), 323-343 (AVQNCLWLGLVLLAWHFLFDE), and 360-380 (IFVCLLVGFLLWLVKTLLVKV). A Phosphoserine modification is found at Ser462. The next 2 helical transmembrane spans lie at 615-635 (MVNIVVGIIILVIWLIILGIT) and 651-671 (AFIFGNMCKIVFESIIYLFVI).

Belongs to the MscS (TC 1.A.23) family.

It is found in the membrane. Its function is as follows. Mechanosensitive channel that opens in response to stretch forces in the membrane lipid bilayer. The chain is Mechanosensitive ion channel protein 6 (MSL6) from Arabidopsis thaliana (Mouse-ear cress).